The primary structure comprises 531 residues: Polypyrimidine tract-binding protein 2 (531 aa).

Position 1 is an N-acetylmethionine (Met1). Residues Ser26 and Ser27 each carry the phosphoserine modification. 2 consecutive RRM domains span residues 59–133 (RVLH…YSNH) and 181–257 (LRII…FSKL). Position 308 is a phosphoserine (Ser308). RRM domains are found at residues 338-412 (TVLL…LSKH) and 455-529 (ATLH…FSKS).

In terms of assembly, monomer. Interacts with NOVA1; the interaction is direct. Identified in a mRNP complex, at least composed of DHX9, DDX3X, ELAVL1, HNRNPU, IGF2BP1, ILF3, PABPC1, PCBP2, PTBP2, STAU1, STAU2, SYNCRIP and YBX1. Part of a ternary complex containing KHSRP and HNRPH1. Interacts with NOVA2; the interaction is direct. In terms of tissue distribution, mainly expressed in brain although also detected in other tissues like heart and skeletal muscle. Isoform 1 and isoform 2 are specifically expressed in neuronal tissues. Isoform 3 and isoform 4 are expressed in non-neuronal tissues. Isoform 5 and isoform 6 are truncated forms expressed in non-neuronal tissues.

Its subcellular location is the nucleus. RNA-binding protein which binds to intronic polypyrimidine tracts and mediates negative regulation of exons splicing. May antagonize in a tissue-specific manner the ability of NOVA1 to activate exon selection. In addition to its function in pre-mRNA splicing, plays also a role in the regulation of translation. Functionally, reduced affinity for RNA. The chain is Polypyrimidine tract-binding protein 2 from Homo sapiens (Human).